Reading from the N-terminus, the 386-residue chain is Patatin group M-2 (386 aa).

The signal sequence occupies residues 1–23; that stretch reads MATTKSFLILFFMILATTSSTCA. Residues 32–229 form the PNPLA domain; it reads LSIDGGGIKG…TVGDPALLSL (198 aa). Residues 36 to 41 carry the GXGXXG motif; that stretch reads GGGIKG. Positions 75–79 match the GXSXG motif; sequence GTSTG. Catalysis depends on Ser-77, which acts as the Nucleophile. Asn-115 is a glycosylation site (N-linked (GlcNAc...) asparagine). Asp-215 (proton acceptor) is an active-site residue. Positions 215 to 217 match the DGA/G motif; that stretch reads DGG. Residues 321–384 adopt a coiled-coil conformation; it reads ENALTGTTTE…DRKKLRANKA (64 aa).

The protein belongs to the patatin family. In terms of tissue distribution, tuber.

The protein resides in the vacuole. Probable lipolytic acyl hydrolase (LAH), an activity which is thought to be involved in the response of tubers to pathogens. The sequence is that of Patatin group M-2 from Solanum tuberosum (Potato).